A 527-amino-acid polypeptide reads, in one-letter code: MSLQMVTVGHNIALIQPGFSLMNFDGQVFFFGQKGWPKRSCPTGVFHFDIKQNHLKLKPAIFSKDSCYLPPLRYPATCSYKGSIDSDKHQYIIHGGKTPNNELSDKIYIMSVACKNNKKVTFRCTEKDLVGDVPEPRYGHSIDVVYSRGKSMGVLFGGRSYMPSTQRTTEKWNSVADCLPHVFLIDFEFGCATSYILPELQDGLSFHVSIARNDTVYILGGHSLASNIRPANLYRIRVDLPLGTPAVNCTVLPGGISVSSAILTQTNNDEFVIVGGYQLENQKRMVCSLVSLGDNTIEISEMETPDWTSDIKHSKIWFGSNMGNGTIFLGIPGDNKQAMSEAFYFYTLRCSEEDLSEDQKIVSNSQTSTEDPGDSTPFEDSEEFCFSAEATSFDGDDEFDTYNEDDEDDESVTGYWITCCPTCDVDINTWVPFYSTELNKPAMIYCSHGDGHWVHAQCMDLEERTLIHLSEGSNKYYCNEHVQIARALQTPKRNPPLQKPPMKSLHKKGSGKVLTPAKKSFLRRLFD.

Residues 359-380 (QKIVSNSQTSTEDPGDSTPFED) are disordered. The span at 361–370 (IVSNSQTSTE) shows a compositional bias: polar residues. Over residues 371-380 (DPGDSTPFED) the composition is skewed to acidic residues. The segment at 416 to 484 (WITCCPTCDV…KYYCNEHVQI (69 aa)) adopts a PHD-type; atypical zinc-finger fold. Residues cysteine 419, cysteine 423, cysteine 446, histidine 452, histidine 455, cysteine 458, cysteine 478, and histidine 481 each contribute to the Zn(2+) site. Residues 490–511 (TPKRNPPLQKPPMKSLHKKGSG) form a disordered region.

It belongs to the RAG2 family. As to quaternary structure, component of the RAG complex composed of core components RAG1 and RAG2, and associated component HMGB1 or HMGB2. In terms of tissue distribution, maturing lymphoid cells.

Its subcellular location is the nucleus. Core component of the RAG complex, a multiprotein complex that mediates the DNA cleavage phase during V(D)J recombination. V(D)J recombination assembles a diverse repertoire of immunoglobulin and T-cell receptor genes in developing B and T-lymphocytes through rearrangement of different V (variable), in some cases D (diversity), and J (joining) gene segments. DNA cleavage by the RAG complex occurs in 2 steps: a first nick is introduced in the top strand immediately upstream of the heptamer, generating a 3'-hydroxyl group that can attack the phosphodiester bond on the opposite strand in a direct transesterification reaction, thereby creating 4 DNA ends: 2 hairpin coding ends and 2 blunt, 5'-phosphorylated ends. The chromatin structure plays an essential role in the V(D)J recombination reactions and the presence of histone H3 trimethylated at 'Lys-4' (H3K4me3) stimulates both the nicking and haipinning steps. The RAG complex also plays a role in pre-B cell allelic exclusion, a process leading to expression of a single immunoglobulin heavy chain allele to enforce clonality and monospecific recognition by the B-cell antigen receptor (BCR) expressed on individual B-lymphocytes. The introduction of DNA breaks by the RAG complex on one immunoglobulin allele induces ATM-dependent repositioning of the other allele to pericentromeric heterochromatin, preventing accessibility to the RAG complex and recombination of the second allele. In the RAG complex, RAG2 is not the catalytic component but is required for all known catalytic activities mediated by RAG1. It probably acts as a sensor of chromatin state that recruits the RAG complex to H3K4me3. This Mus musculus (Mouse) protein is V(D)J recombination-activating protein 2 (Rag2).